Here is a 143-residue protein sequence, read N- to C-terminus: Peptidyl-prolyl cis-trans isomerase B (143 aa).

In terms of domain architecture, PPIase cyclophilin-type spans 1–143 (MKTGYFLLED…DVMKEVRVEG (143 aa)).

The protein belongs to the cyclophilin-type PPIase family.

It localises to the cytoplasm. The enzyme catalyses [protein]-peptidylproline (omega=180) = [protein]-peptidylproline (omega=0). Inhibited by cyclosporin A (CsA). PPIases accelerate the folding of proteins. It catalyzes the cis-trans isomerization of proline imidic peptide bonds in oligopeptides. This chain is Peptidyl-prolyl cis-trans isomerase B (ppiB), found in Bacillus subtilis (strain 168).